A 317-amino-acid polypeptide reads, in one-letter code: Olfactory receptor 5K16 (317 aa).

The Extracellular portion of the chain corresponds to 1 to 28 (MEKTNHSLTTQFILVGFSDHPDLKTPLF). A glycan (N-linked (GlcNAc...) asparagine) is linked at N5. The helical transmembrane segment at 29–49 (LLFSVIYLVTMVGNLGLVAVI) threads the bilayer. The Cytoplasmic portion of the chain corresponds to 50-56 (YLEPRLH). The helical transmembrane segment at 57-77 (TPMYIFLGNLALMDSCCSCAI) threads the bilayer. The Extracellular segment spans residues 78–93 (TPKILENFFSVDRRIS). The helical transmembrane segment at 94-114 (LYECMAQFYFLCLAETADCFL) threads the bilayer. Residues C97 and C189 are joined by a disulfide bond. Residues 115–144 (LAAMAYDRYVAICNPLQYHSMMSKKLSIQM) lie on the Cytoplasmic side of the membrane. The chain crosses the membrane as a helical span at residues 145–165 (SIGTFITSNLHSLIHVGCLLR). Over 166–198 (LTFCKSNRIDHFFCDILPLYRLSCTDPFINELM) the chain is Extracellular. Residues 199 to 219 (IYIFSMPIQVFTITTVLVSYF) traverse the membrane as a helical segment. Residues 220 to 239 (CILLTIFKMKSKDGRGKAFS) lie on the Cytoplasmic side of the membrane. Residues 240-259 (TCASHFFSVSIFYVCLLMYI) traverse the membrane as a helical segment. The Extracellular portion of the chain corresponds to 260–268 (RPFDEGNKD). The chain crosses the membrane as a helical span at residues 269 to 289 (IPVAVFYTIIIPLLNPFIYSL). The Cytoplasmic portion of the chain corresponds to 290 to 317 (RNKEVVNAVKKVMKTHSIFKNASASMAR).

This sequence belongs to the G-protein coupled receptor 1 family.

The protein localises to the cell membrane. Functionally, potential odorant receptor. This Mus musculus (Mouse) protein is Olfactory receptor 5K16.